Reading from the N-terminus, the 259-residue chain is Hemin import ATP-binding protein HmuV (259 aa).

The ABC transporter domain maps to 6–242; it reads IQGRDLCVTY…ERIEQVYGYQ (237 aa). 38 to 45 contacts ATP; the sequence is GPNGAGKS.

It belongs to the ABC transporter superfamily. Heme (hemin) importer (TC 3.A.1.14.5) family. In terms of assembly, the complex is composed of two ATP-binding proteins (HmuV), two transmembrane proteins (HmuU) and a solute-binding protein (HmuT).

The protein localises to the cell inner membrane. Functionally, part of the ABC transporter complex HmuTUV involved in hemin import. Responsible for energy coupling to the transport system. The protein is Hemin import ATP-binding protein HmuV of Vibrio cholerae serotype O1 (strain ATCC 39315 / El Tor Inaba N16961).